Consider the following 103-residue polypeptide: Integration host factor subunit beta (103 aa).

The protein belongs to the bacterial histone-like protein family. As to quaternary structure, heterodimer of an alpha and a beta chain.

This protein is one of the two subunits of integration host factor, a specific DNA-binding protein that functions in genetic recombination as well as in transcriptional and translational control. The polypeptide is Integration host factor subunit beta (Bradyrhizobium sp. (strain BTAi1 / ATCC BAA-1182)).